The primary structure comprises 193 residues: Ion-translocating oxidoreductase complex subunit A (193 aa).

Transmembrane regions (helical) follow at residues 5–25, 39–59, 63–83, 102–122, 134–154, and 171–191; these read LLLF…FLGL, MGMG…AWLI, ILIP…VIAV, LLGI…VALL, ALYG…FAAI, and AIAL…SGLV.

It belongs to the NqrDE/RnfAE family. As to quaternary structure, the complex is composed of six subunits: RsxA, RsxB, RsxC, RsxD, RsxE and RsxG.

It is found in the cell inner membrane. Its function is as follows. Part of a membrane-bound complex that couples electron transfer with translocation of ions across the membrane. Required to maintain the reduced state of SoxR. This Shigella flexneri serotype 5b (strain 8401) protein is Ion-translocating oxidoreductase complex subunit A.